We begin with the raw amino-acid sequence, 528 residues long: GMP synthase [glutamine-hydrolyzing] (528 aa).

The Glutamine amidotransferase type-1 domain occupies 13–204; the sequence is AIVILDFGSQ…VYDICSCEPD (192 aa). Cys90 acts as the Nucleophile in catalysis. Residues His178 and Glu180 contribute to the active site. The GMPS ATP-PPase domain occupies 205 to 403; the sequence is WTTNLFIDEA…LGLPDEIVRR (199 aa). Residue 232 to 238 participates in ATP binding; sequence SGGVDSS.

Homodimer.

The catalysed reaction is XMP + L-glutamine + ATP + H2O = GMP + L-glutamate + AMP + diphosphate + 2 H(+). It participates in purine metabolism; GMP biosynthesis; GMP from XMP (L-Gln route): step 1/1. Functionally, catalyzes the synthesis of GMP from XMP. This chain is GMP synthase [glutamine-hydrolyzing], found in Prochlorococcus marinus (strain NATL2A).